The following is a 54-amino-acid chain: Hemolytic toxin (54 aa).

The plays an important role in the hemolytic activity stretch occupies residues 3–12; it reads ALAGTIIAGA. Positions 11–30 are N-terminal region; the sequence is GASLGFQILDKVLGELGKVS.

This sequence belongs to the actinoporin family. Sea anemone subfamily. As to quaternary structure, octamer or nonamer in membranes. Monomer in the soluble state.

It is found in the secreted. It localises to the nematocyst. The protein resides in the target cell membrane. Pore-forming protein that forms cations-selective hydrophilic pores of around 1 nm and causes cytolysis. Pore formation is a multi-step process that involves specific recognition of membrane sphingomyelin (but neither cholesterol nor phosphatidylcholine) using aromatic rich region and adjacent phosphocholine (POC) binding site, firm binding to the membrane (mainly driven by hydrophobic interactions) accompanied by the transfer of the N-terminal region to the lipid-water interface and finally pore formation after oligomerization of monomers. In Heteractis magnifica (Magnificent sea anemone), this protein is Hemolytic toxin.